We begin with the raw amino-acid sequence, 340 residues long: Putative methionyl-tRNA formyltransferase (340 aa).

This sequence belongs to the Fmt family.

It is found in the mitochondrion. The protein resides in the mitochondrion matrix. The protein localises to the cytoplasm. The catalysed reaction is L-methionyl-tRNA(fMet) + (6R)-10-formyltetrahydrofolate = N-formyl-L-methionyl-tRNA(fMet) + (6S)-5,6,7,8-tetrahydrofolate + H(+). In terms of biological role, formylates methionyl-tRNA in mitochondria and the cytoplasm. Responsible for the formylation of the N-terminally formylated (Nt-formylated) mitochondrial matrix proteins that are encoded by mitochondrial DNA. Nt-formylated proteins in the cytoplasm are strongly up-regulated in stationary phase or upon starvation for specific amino acids and are targeted for degradation by an E3 ubiquitin ligase-mediated fMet/N-end rule pathway. Increased Nt-formylation of cytosolic proteins appears to be important for adaptation to these stresses. The protein is Putative methionyl-tRNA formyltransferase (fmt1) of Schizosaccharomyces pombe (strain 972 / ATCC 24843) (Fission yeast).